The following is a 968-amino-acid chain: Sorting nexin-13 (968 aa).

The PXA domain maps to 97–284 (ANIIDEPLQQ…YVIWMIRDSN (188 aa)). An RGS domain is found at 373-496 (PLDSILVDNV…RKVYELMLRD (124 aa)). A PX domain is found at 570 to 691 (YADYDPYAVA…DFLENKAYSK (122 aa)). A 1,2-diacyl-sn-glycero-3-phospho-(1D-myo-inositol-3-phosphate) is bound by residues arginine 612, serine 614, lysine 639, and arginine 653.

This sequence belongs to the sorting nexin family.

The protein localises to the early endosome membrane. Functionally, may be involved in several stages of intracellular trafficking. May play a role in endosome homeostasis. Acts as a GAP for Galphas. The sequence is that of Sorting nexin-13 (SNX13) from Homo sapiens (Human).